The chain runs to 252 residues: Chitooligosaccharide deacetylase (252 aa).

Mg(2+)-binding residues include His61 and His125.

It belongs to the YdjC deacetylase family. ChbG subfamily. Homodimer. The cofactor is Mg(2+).

The protein localises to the cytoplasm. It catalyses the reaction N,N'-diacetylchitobiose + H2O = N-acetyl-beta-D-glucosaminyl-(1-&gt;4)-D-glucosamine + acetate. The catalysed reaction is diacetylchitobiose-6'-phosphate + H2O = N'-monoacetylchitobiose-6'-phosphate + acetate. It functions in the pathway glycan degradation; chitin degradation. Its function is as follows. Involved in the degradation of chitin. ChbG is essential for growth on the acetylated chitooligosaccharides chitobiose and chitotriose but is dispensable for growth on cellobiose and chitosan dimer, the deacetylated form of chitobiose. Deacetylation of chitobiose-6-P and chitotriose-6-P is necessary for both the activation of the chb promoter by the regulatory protein ChbR and the hydrolysis of phosphorylated beta-glucosides by the phospho-beta-glucosidase ChbF. Catalyzes the removal of only one acetyl group from chitobiose-6-P to yield monoacetylchitobiose-6-P, the inducer of ChbR and the substrate of ChbF. This Salmonella paratyphi B (strain ATCC BAA-1250 / SPB7) protein is Chitooligosaccharide deacetylase.